A 160-amino-acid chain; its full sequence is MGGYTYENEFTSDIPAPKLFKAFVLDADNLIPKIAPQAIKCAEILEGDGGPGTIKKITFGEGSHYGYVKHKIHSIDKENHTYSYSLIEGDALSDNIEKIDYETKLVSAPHGGTIIKTTSKYHTKGDVEIKEEHVKAGKEKASHLFKLIEGYLKDHPSEYN.

The protein belongs to the BetVI family. Monomer.

The sequence is that of Major strawberry allergen Fra a 1-D from Fragaria ananassa (Strawberry).